Consider the following 83-residue polypeptide: MKILIFIIASFMLIGVECKEGYPMGRDGCKISCVINNNFCKVECQAKWRQSDGYCYFWGLSCYCTNLPEDAQVWDSSTNKCGG.

An N-terminal signal peptide occupies residues 1–18 (MKILIFIIASFMLIGVEC). In terms of domain architecture, LCN-type CS-alpha/beta spans 19-82 (KEGYPMGRDG…VWDSSTNKCG (64 aa)). Intrachain disulfides connect Cys29–Cys81, Cys33–Cys55, Cys40–Cys62, and Cys44–Cys64. A propeptide is located at residue Gly83.

Contains 4 disulfide bonds. In terms of tissue distribution, expressed by the venom gland.

The protein resides in the secreted. Beta toxins bind voltage-independently at site-4 of sodium channels (Nav) and shift the voltage of activation toward more negative potentials thereby affecting sodium channel activation and promoting spontaneous and repetitive firing. This toxin is lethal to insects (A.domestica). It is not toxic to mice and does not affect mammal F11 sodium channels. The protein is Putative beta-neurotoxin RjAa12f of Rhopalurus junceus (Caribbean blue scorpion).